A 1345-amino-acid polypeptide reads, in one-letter code: MTRDSKKKHHWGTAFLRTIGVKRKHKKDRNFLNNTTGENVSTTASAERFRRVGGNPDIPSLLKPETFTESPAKGSQKAAASSLAHSQGVFNIPIVIDPMETNRLEKTNTNLTAGSLKGRFQDGNSNSNSVPSLSVQALEKEKLQSGKREGSSNQAEEKTPDGHDEHTAFETFLSFAHNAVSHIPKINVQDADNGTISRNEPKDRKKNSSNISGALSENSTNNKNTSSTKESDGPFLKNLDNILAASKSSTPSNQQLNTTEAGSKSKPSSLSRLAFGNLKGHIHSNSHSSSNAISGDDTSLDDTRKMTDDMARKVVFEPIRHSHDKPTPGVGNLKLEHFDDSQATLEGLEAMSAESLPEADHLDSRGPVQQSNLERKTVPSKWSVVSSSTTDGVKPRRRAKSMISAMADKQNTSSDVLQDCKKRLSFNSSNGLTNNDPEYEDREPREMSKKFLNRRSFSPGSISMGMKVLPSTALKYSLNKVKNSTDIASTIIPRPSMSNGRPSSGLRRSSSKSFSSTPVNIIEPSEENGRQSSIRIKGVEYASEKKDAEFHAIFKDSGVSPNERLILDHSCALSRDILLQGRMYISDQHIGFYSNILGWVSTVFIPFKTIVQIEKRATAGIFPNGIVIDTLHTKYTFASFTSRDATYDLITEVWNQIILGKRFRSNSNNTNSSSNSISDDENDDYDDDYDDYGDDDDDLYDNSNNISDSTDMTSSVSIGKPEDLPMPLQTDTPYGTGIPPLGPKIHSPTETVYKPAPNEKLVNESTIHASLGRVVNILFGKDVSYIMAILKAQKNSDISPIPVLVDSPTVSEGKKRDYSYVKTTPGAIGPGKTKCMITETIQHFNLEEYVQVLQTTKTPDVPSGNSFYVRTVYLLSWANNNETKLKLYVSVEWTGKSLIKSPIEKGTFDGVTDATKILVEELGNILTRSATKRKRSSKENTVTVSTLPKMEPSSHAPTEPDIQKDKDDSIIRENENIPAPLGTVVQLLFGSNTEYMQKVITRDKNNVNVETIPKFTPSLVEGGSRHYEYTKKLNNSIGPKQTKCLLTESIEHMDINNYVLVTQTTKTPDVPSGSNFAVESKIFLFWGQHDTTNMTVITKINWTSKSFLKGAIEKGSVEGQKVSVDYMLSELRDIISRAKSKKPVKKVMKSHDKHRPFHSKVEQKSSESRKSDDNKDILTHILDFVQNNFSSEIFMNKLLSPQKLFLILGLTIMLFWSPRLHVFQEKNNLQIIKPGRLLIDGQEYNYVPSFGTLYNSYENAISSKKKRENVNYARDKSPIVGRESDIWDWISNRGSAISPRGRAMLRNDDEHKLQQLSESIKITEMQLNHMKTMLDNIERDANDLS.

The Cytoplasmic portion of the chain corresponds to 1 to 1197; the sequence is MTRDSKKKHH…NFSSEIFMNK (1197 aa). 7 disordered regions span residues 51 to 80, 115 to 134, 139 to 164, 190 to 302, 356 to 397, 425 to 447, and 489 to 531; these read RVGGNPDIPSLLKPETFTESPAKGSQKAAA, SLKGRFQDGNSNSNSVPSLS, EKEKLQSGKREGSSNQAEEKTPDGHD, DADN…SLDD, LPEA…KPRR, SFNSSNGLTNNDPEYEDREPREM, and STII…NGRQ. A Phosphothreonine modification is found at threonine 66. Residues 216–228 are compositionally biased toward low complexity; it reads SENSTNNKNTSST. The segment covering 246 to 271 has biased composition (polar residues); that stretch reads SKSSTPSNQQLNTTEAGSKSKPSSLS. The segment covering 283-294 has biased composition (low complexity); that stretch reads HSNSHSSSNAIS. Positions 425–436 are enriched in polar residues; the sequence is SFNSSNGLTNND. The segment covering 498-516 has biased composition (low complexity); the sequence is SNGRPSSGLRRSSSKSFSS. One can recognise a GRAM domain in the interval 549–616; the sequence is EFHAIFKDSG…FKTIVQIEKR (68 aa). Residues 665–677 are compositionally biased toward low complexity; it reads SNSNNTNSSSNSI. The segment at 665–722 is disordered; the sequence is SNSNNTNSSSNSISDDENDDYDDDYDDYGDDDDDLYDNSNNISDSTDMTSSVSIGKPE. The span at 678 to 700 shows a compositional bias: acidic residues; it reads SDDENDDYDDDYDDYGDDDDDLY. Serine 747 is subject to Phosphoserine. 2 VASt domains span residues 758–930 and 967–1139; these read NEKL…TRSA and DDSI…SRAK. Residues 930–963 are disordered; sequence ATKRKRSSKENTVTVSTLPKMEPSSHAPTEPDIQ. The span at 1141-1158 shows a compositional bias: basic residues; that stretch reads KKPVKKVMKSHDKHRPFH. A disordered region spans residues 1141–1172; the sequence is KKPVKKVMKSHDKHRPFHSKVEQKSSESRKSD. Basic and acidic residues predominate over residues 1159-1172; it reads SKVEQKSSESRKSD. The helical transmembrane segment at 1198–1218 threads the bilayer; the sequence is LLSPQKLFLILGLTIMLFWSP. The Lumenal portion of the chain corresponds to 1219 to 1345; sequence RLHVFQEKNN…NIERDANDLS (127 aa).

The protein belongs to the YSP2 family.

The protein resides in the endoplasmic reticulum membrane. Functionally, may be involved in sterol transfer between intracellular membranes. The protein is Membrane-anchored lipid-binding protein LAM4 of Saccharomyces cerevisiae (strain ATCC 204508 / S288c) (Baker's yeast).